The primary structure comprises 135 residues: Type 3 secretion system stator protein (135 aa).

It belongs to the SctL stator family. The core secretion machinery of the T3SS is composed of approximately 20 different proteins, including cytoplasmic components, a base, an export apparatus and a needle. This subunit is part of the cytosolic complex.

It is found in the cytoplasm. Its function is as follows. Component of the type III secretion system (T3SS), also called injectisome, which is used to inject bacterial effector proteins into eukaryotic host cells. Acts as a regulator of the HrcN/SctN ATPase activity. This Rhizobium fredii (Sinorhizobium fredii) protein is Type 3 secretion system stator protein.